The primary structure comprises 89 residues: Small ribosomal subunit protein uS15 (89 aa).

The segment at 1 to 24 (MSLNAETKAGIVEKYRRDPSDTGS) is disordered. Residues 11–20 (IVEKYRRDPS) show a composition bias toward basic and acidic residues.

It belongs to the universal ribosomal protein uS15 family. In terms of assembly, part of the 30S ribosomal subunit. Forms a bridge to the 50S subunit in the 70S ribosome, contacting the 23S rRNA.

One of the primary rRNA binding proteins, it binds directly to 16S rRNA where it helps nucleate assembly of the platform of the 30S subunit by binding and bridging several RNA helices of the 16S rRNA. Its function is as follows. Forms an intersubunit bridge (bridge B4) with the 23S rRNA of the 50S subunit in the ribosome. The chain is Small ribosomal subunit protein uS15 from Thioalkalivibrio sulfidiphilus (strain HL-EbGR7).